Reading from the N-terminus, the 780-residue chain is MANKNPLQKPFLFIILSINLIFLQAETTTQISTKKTYVIHMDKSAMPLPYTNHLQWYSSKINSVTQHKSQEEEGNNNRILYTYQTAFHGLAAQLTQEEAERLEEEDGVVAVIPETRYELHTTRSPTFLGLERQESERVWAERVTDHDVVVGVLDTGIWPESESFNDTGMSPVPATWRGACETGKRFLKRNCNRKIVGARVFYRGYEAATGKIDEELEYKSPRDRDGHGTHTAATVAGSPVKGANLFGFAYGTARGMAQKARVAAYKVCWVGGCFSSDILSAVDQAVADGVQVLSISLGGGVSTYSRDSLSIATFGAMEMGVFVSCSAGNGGPDPISLTNVSPWITTVGASTMDRDFPATVKIGTMRTFKGVSLYKGRTVLPKNKQYPLVYLGRNASSPDPTSFCLDGALDRRHVAGKIVICDRGVTPRVQKGQVVKRAGGIGMVLTNTATNGEELVADSHMLPAVAVGEKEGKLIKQYAMTSKKATASLEILGTRIGIKPSPVVAAFSSRGPNFLSLEILKPDLLAPGVNILAAWTGDMAPSSLSSDPRRVKFNILSGTSMSCPHVSGVAALIKSRHPDWSPAAIKSALMTTAYVHDNMFKPLTDASGAAPSSPYDHGAGHIDPLRATDPGLVYDIGPQEYFEFLCTQDLSPSQLKVFTKHSNRTCKHTLAKNPGNLNYPAISALFPENTHVKAMTLRRTVTNVGPHISSYKVSVSPFKGASVTVQPKTLNFTSKHQKLSYTVTFRTRFRMKRPEFGGLVWKSTTHKVRSPVIITWLPPL.

The signal sequence occupies residues 1 to 25; it reads MANKNPLQKPFLFIILSINLIFLQA. The propeptide at 26–120 is activation peptide; the sequence is ETTTQISTKK…VIPETRYELH (95 aa). In terms of domain architecture, Inhibitor I9 spans 36–120; that stretch reads TYVIHMDKSA…VIPETRYELH (85 aa). The Peptidase S8 domain occupies 116-628; it reads RYELHTTRSP…AGHIDPLRAT (513 aa). Residue aspartate 154 is the Charge relay system of the active site. Asparagine 165 carries an N-linked (GlcNAc...) asparagine glycan. Residue histidine 227 is the Charge relay system of the active site. The PA domain occupies 384-477; the sequence is KQYPLVYLGR…GEKEGKLIKQ (94 aa). Residue asparagine 394 is glycosylated (N-linked (GlcNAc...) asparagine). Serine 560 functions as the Charge relay system in the catalytic mechanism. N-linked (GlcNAc...) asparagine glycans are attached at residues asparagine 663 and asparagine 731.

It belongs to the peptidase S8 family.

Its subcellular location is the secreted. The protein is Subtilisin-like protease SBT1.3 of Arabidopsis thaliana (Mouse-ear cress).